Consider the following 406-residue polypeptide: Cysteine desulfurase (406 aa).

Lys-226 carries the post-translational modification N6-(pyridoxal phosphate)lysine. The active-site Cysteine persulfide intermediate is the Cys-364.

Belongs to the class-V pyridoxal-phosphate-dependent aminotransferase family. Csd subfamily. In terms of assembly, homodimer. Interacts with SufE and the SufBCD complex composed of SufB, SufC and SufD. The interaction with SufE is required to mediate the direct transfer of the sulfur atom from the S-sulfanylcysteine. The cofactor is pyridoxal 5'-phosphate.

It localises to the cytoplasm. The enzyme catalyses (sulfur carrier)-H + L-cysteine = (sulfur carrier)-SH + L-alanine. It catalyses the reaction L-selenocysteine + AH2 = hydrogenselenide + L-alanine + A + H(+). It participates in cofactor biosynthesis; iron-sulfur cluster biosynthesis. In terms of biological role, cysteine desulfurases mobilize the sulfur from L-cysteine to yield L-alanine, an essential step in sulfur metabolism for biosynthesis of a variety of sulfur-containing biomolecules. Component of the suf operon, which is activated and required under specific conditions such as oxidative stress and iron limitation. Acts as a potent selenocysteine lyase in vitro, that mobilizes selenium from L-selenocysteine. Selenocysteine lyase activity is however unsure in vivo. This chain is Cysteine desulfurase, found in Escherichia coli O7:K1 (strain IAI39 / ExPEC).